Reading from the N-terminus, the 817-residue chain is Phospholipase D alpha 2 (817 aa).

The C2 domain maps to 1–130 (MAHLLLHGTL…LSGEAIERRL (130 aa)). Aspartate 192 is a Ca(2+) binding site. Residues 333–372 (YMITHHQKTVIVDHDMPVPRGGGSRRIVSFVGGLDLCDGR) form the PLD phosphodiesterase 1 domain. Residues histidine 338, lysine 340, and aspartate 345 contribute to the active site. An a 1,2-diacyl-sn-glycero-3-phosphate-binding site is contributed by histidine 338. Histidine 378 and histidine 412 together coordinate Ca(2+). Positions 529 and 668 each coordinate a 1,2-diacyl-sn-glycero-3-phosphate. In terms of domain architecture, PLD phosphodiesterase 2 spans 663–690 (FMIYVHSKMMIVDDEYIIVGSANINQRS). Active-site residues include histidine 668, lysine 670, and aspartate 675. Glutamate 730 is a binding site for Ca(2+).

Belongs to the phospholipase D family. C2-PLD subfamily. It depends on Ca(2+) as a cofactor.

It carries out the reaction a 1,2-diacyl-sn-glycero-3-phosphocholine + H2O = a 1,2-diacyl-sn-glycero-3-phosphate + choline + H(+). In terms of biological role, hydrolyzes glycerol-phospholipids at the terminal phosphodiesteric bond. Plays an important role in various cellular processes. The chain is Phospholipase D alpha 2 (PLD2) from Oryza sativa subsp. japonica (Rice).